Consider the following 204-residue polypeptide: Phosphatidylserine decarboxylase proenzyme (204 aa).

Residue Ser-169 is the Schiff-base intermediate with substrate; via pyruvic acid of the active site. Ser-169 is subject to Pyruvic acid (Ser); by autocatalysis.

Belongs to the phosphatidylserine decarboxylase family. PSD-A subfamily. As to quaternary structure, heterodimer of a large membrane-associated beta subunit and a small pyruvoyl-containing alpha subunit. Requires pyruvate as cofactor. Is synthesized initially as an inactive proenzyme. Formation of the active enzyme involves a self-maturation process in which the active site pyruvoyl group is generated from an internal serine residue via an autocatalytic post-translational modification. Two non-identical subunits are generated from the proenzyme in this reaction, and the pyruvate is formed at the N-terminus of the alpha chain, which is derived from the carboxyl end of the proenzyme. The post-translation cleavage follows an unusual pathway, termed non-hydrolytic serinolysis, in which the side chain hydroxyl group of the serine supplies its oxygen atom to form the C-terminus of the beta chain, while the remainder of the serine residue undergoes an oxidative deamination to produce ammonia and the pyruvoyl prosthetic group on the alpha chain.

The protein localises to the cell membrane. It carries out the reaction a 1,2-diacyl-sn-glycero-3-phospho-L-serine + H(+) = a 1,2-diacyl-sn-glycero-3-phosphoethanolamine + CO2. It participates in phospholipid metabolism; phosphatidylethanolamine biosynthesis; phosphatidylethanolamine from CDP-diacylglycerol: step 2/2. Catalyzes the formation of phosphatidylethanolamine (PtdEtn) from phosphatidylserine (PtdSer). The protein is Phosphatidylserine decarboxylase proenzyme of Solibacter usitatus (strain Ellin6076).